The chain runs to 64 residues: Makatoxin-1 (64 aa).

Residues Arg-2 to Arg-64 form the LCN-type CS-alpha/beta domain. Intrachain disulfides connect Cys-12-Cys-63, Cys-16-Cys-36, Cys-22-Cys-46, and Cys-26-Cys-48.

Expressed by the venom gland.

The protein localises to the secreted. This protein markedly relaxes the rat carbachol-precontracted anococcygeus muscle. This relaxation is inhibited by the inhibitor of nitric oxide (NO) synthase, N-nitro-L-arginine methyl ester (L-NAME), suggesting that the response induced by this protein is NO-mediated. This Olivierus martensii (Manchurian scorpion) protein is Makatoxin-1.